Here is a 134-residue protein sequence, read N- to C-terminus: MAKGHTKRSYSQRYAKWQAKFNAFSNPTVASTILSNVAPVAQQNFQTNVPTFTAVNENVSAVLSQYGITGPNRAIYQGFGLKIARALNRIGSGPALVNMINGLKSYYISAFNANPQVLDAVVNIITGSPTGYVS.

Homodimer.

The protein resides in the virion. Self-assembles to form a helical, filamentous nucleocapsid. The capsid proteins wrap around the DNA and maintain it in an A-form by non-specific desolvation and specific coordination of the DNA phosphate groups by positively charged residues. This certainly protects the viral DNA under conditions such as the extreme desiccation of its host. The sequence is that of Putative capsid protein from Sulfolobus islandicus rod-shaped virus 1 (SIRV-1).